A 417-amino-acid polypeptide reads, in one-letter code: Serine hydroxymethyltransferase (417 aa).

(6S)-5,6,7,8-tetrahydrofolate contacts are provided by residues leucine 116 and 120–122 (GHL). Lysine 225 is modified (N6-(pyridoxal phosphate)lysine). 350–352 (SPF) contributes to the (6S)-5,6,7,8-tetrahydrofolate binding site.

This sequence belongs to the SHMT family. In terms of assembly, homodimer. It depends on pyridoxal 5'-phosphate as a cofactor.

It localises to the cytoplasm. The enzyme catalyses (6R)-5,10-methylene-5,6,7,8-tetrahydrofolate + glycine + H2O = (6S)-5,6,7,8-tetrahydrofolate + L-serine. It participates in one-carbon metabolism; tetrahydrofolate interconversion. The protein operates within amino-acid biosynthesis; glycine biosynthesis; glycine from L-serine: step 1/1. In terms of biological role, catalyzes the reversible interconversion of serine and glycine with tetrahydrofolate (THF) serving as the one-carbon carrier. This reaction serves as the major source of one-carbon groups required for the biosynthesis of purines, thymidylate, methionine, and other important biomolecules. Also exhibits THF-independent aldolase activity toward beta-hydroxyamino acids, producing glycine and aldehydes, via a retro-aldol mechanism. In Ligilactobacillus salivarius (strain UCC118) (Lactobacillus salivarius), this protein is Serine hydroxymethyltransferase.